A 203-amino-acid polypeptide reads, in one-letter code: Outer-membrane lipoprotein carrier protein (203 aa).

The N-terminal stretch at 1 to 21 (MKKLLVACCLLSGFASTSVLA) is a signal peptide.

It belongs to the LolA family. As to quaternary structure, monomer.

It is found in the periplasm. In terms of biological role, participates in the translocation of lipoproteins from the inner membrane to the outer membrane. Only forms a complex with a lipoprotein if the residue after the N-terminal Cys is not an aspartate (The Asp acts as a targeting signal to indicate that the lipoprotein should stay in the inner membrane). This chain is Outer-membrane lipoprotein carrier protein, found in Serratia proteamaculans (strain 568).